The sequence spans 196 residues: Putative NADH dehydrogenase/NAD(P)H nitroreductase PXO_03909 (196 aa).

This sequence belongs to the nitroreductase family. HadB/RutE subfamily. It depends on FMN as a cofactor.

The chain is Putative NADH dehydrogenase/NAD(P)H nitroreductase PXO_03909 from Xanthomonas oryzae pv. oryzae (strain PXO99A).